The primary structure comprises 412 residues: Imidazolonepropionase (412 aa).

Residues His76 and His78 each contribute to the Fe(3+) site. Zn(2+)-binding residues include His76 and His78. Residues Arg85, Tyr148, and His181 each contribute to the 4-imidazolone-5-propanoate site. Position 148 (Tyr148) interacts with N-formimidoyl-L-glutamate. Residue His242 participates in Fe(3+) binding. A Zn(2+)-binding site is contributed by His242. Glu245 contributes to the 4-imidazolone-5-propanoate binding site. Position 317 (Asp317) interacts with Fe(3+). Asp317 contacts Zn(2+). N-formimidoyl-L-glutamate-binding residues include Asn319 and Gly321. A 4-imidazolone-5-propanoate-binding site is contributed by Ser322.

The protein belongs to the metallo-dependent hydrolases superfamily. HutI family. Zn(2+) serves as cofactor. It depends on Fe(3+) as a cofactor.

Its subcellular location is the cytoplasm. The enzyme catalyses 4-imidazolone-5-propanoate + H2O = N-formimidoyl-L-glutamate. The protein operates within amino-acid degradation; L-histidine degradation into L-glutamate; N-formimidoyl-L-glutamate from L-histidine: step 3/3. Catalyzes the hydrolytic cleavage of the carbon-nitrogen bond in imidazolone-5-propanoate to yield N-formimidoyl-L-glutamate. It is the third step in the universal histidine degradation pathway. The sequence is that of Imidazolonepropionase from Staphylococcus aureus (strain Mu50 / ATCC 700699).